Reading from the N-terminus, the 434-residue chain is Calcium uptake protein 2, mitochondrial (434 aa).

Residues M1–L22 constitute a mitochondrion transit peptide. Residues K172 to Q207 enclose the EF-hand 1 domain. Ca(2+) contacts are provided by D185, D187, N189, M191, E193, and E196. Position 205 is a phosphoserine (S205). The 36-residue stretch at E227–E262 folds into the EF-hand 2; degenerate domain. Positions T293 to L328 constitute an EF-hand 3; degenerate domain. Residues L362–R397 form the EF-hand 4 domain. Positions 375, 377, 379, 381, and 386 each coordinate Ca(2+).

Belongs to the MICU1 family. MICU2 subfamily. As to quaternary structure, heterodimer; disulfide-linked; heterodimerizes with MICU1. Component of the uniplex complex, composed of MCU, EMRE/SMDT1, MICU1 and MICU2 in a 4:4:1:1 stoichiometry.

Its subcellular location is the mitochondrion intermembrane space. The protein resides in the mitochondrion inner membrane. Calcium sensor of the mitochondrial calcium uniporter (MCU) channel, which senses calcium level via its EF-hand domains. MICU1 and MICU2 form a disulfide-linked heterodimer that stimulates and inhibits MCU activity, depending on the concentration of calcium. At low calcium levels, MICU1 occludes the pore of the MCU channel, preventing mitochondrial calcium uptake. At higher calcium levels, calcium-binding to MICU1 and MICU2 induces a conformational change that weakens MCU-MICU1 interactions and moves the MICU1-MICU2 heterodimer away from the pore, allowing calcium permeation through the MCU channel. The protein is Calcium uptake protein 2, mitochondrial of Homo sapiens (Human).